The chain runs to 301 residues: MKKLLPCTALVMCAGMACAQAEERNDWHFNIGAMYEIENVEGYGEDMDGLAEPSVYFNAANGPWRIALAYYQEGPVDYSAGKRGTWFDRPELEVHYQFLENDDFSFGLTGGFRNYGYHYVDEPGKDTANMQRWKIAPDWDVKLTDDLRFNGWLSMYKFANDLNTTGYADTRVETETGLQYTFNETVALRVNYYLERGFNMDDSRNNGEFSTQEIRAYLPLTLGNHSVTPYTRIGLDRWSNWDWQDDIEREGHDFNRVGLFYGYDFQNGLSVSLEYAFEWQDHDEGDSDKFHYAGVGVNYSF.

Residues 1-21 (MKKLLPCTALVMCAGMACAQA) form the signal peptide. The next 16 beta stranded transmembrane spans lie at 27–35 (WHFNIGAMY), 47–57 (MDGLAEPSVYF), 64–72 (WRIALAYYQ), 89–98 (RPELEVHYQF), 104–112 (FSFGLTGGF), 129–136 (NMQRWKIA), 149–158 (FNGWLSMYKF), 172–182 (VETETGLQYTF), 186–195 (VALRVNYYLE), 201–209 (DDSRNNGEF), 213–222 (EIRAYLPLTL), 230–238 (YTRIGLDRW), 240–248 (NWDWQDDIE), 254–265 (FNRVGLFYGYDF), 269–279 (LSVSLEYAFEW), and 289–300 (KFHYAGVGVNYS).

Monomer.

The protein localises to the cell outer membrane. Its function is as follows. Forms channels functionally larger than those of classical porins. In terms of biological role, may act as a regulator of the RCS-phosphorelay signal transduction pathway. This chain is Outer membrane porin G (ompG), found in Escherichia coli (strain K12).